A 134-amino-acid chain; its full sequence is ATP synthase epsilon chain (134 aa).

Belongs to the ATPase epsilon chain family. In terms of assembly, F-type ATPases have 2 components, CF(1) - the catalytic core - and CF(0) - the membrane proton channel. CF(1) has five subunits: alpha(3), beta(3), gamma(1), delta(1), epsilon(1). CF(0) has three main subunits: a, b and c.

It is found in the cell membrane. Functionally, produces ATP from ADP in the presence of a proton gradient across the membrane. In Staphylococcus saprophyticus subsp. saprophyticus (strain ATCC 15305 / DSM 20229 / NCIMB 8711 / NCTC 7292 / S-41), this protein is ATP synthase epsilon chain.